The following is a 411-amino-acid chain: Multifunctional CCA protein (411 aa).

Residues glycine 8 and arginine 11 each coordinate ATP. CTP is bound by residues glycine 8 and arginine 11. Positions 21 and 23 each coordinate Mg(2+). Residues arginine 91, arginine 137, and arginine 140 each coordinate ATP. Residues arginine 91, arginine 137, and arginine 140 each contribute to the CTP site. The HD domain occupies 228-333; the sequence is SGVHTLLVIE…LKVFNALDIW (106 aa).

It belongs to the tRNA nucleotidyltransferase/poly(A) polymerase family. Bacterial CCA-adding enzyme type 1 subfamily. Monomer. Can also form homodimers and oligomers. Mg(2+) is required as a cofactor. It depends on Ni(2+) as a cofactor.

It catalyses the reaction a tRNA precursor + 2 CTP + ATP = a tRNA with a 3' CCA end + 3 diphosphate. It carries out the reaction a tRNA with a 3' CCA end + 2 CTP + ATP = a tRNA with a 3' CCACCA end + 3 diphosphate. Functionally, catalyzes the addition and repair of the essential 3'-terminal CCA sequence in tRNAs without using a nucleic acid template. Adds these three nucleotides in the order of C, C, and A to the tRNA nucleotide-73, using CTP and ATP as substrates and producing inorganic pyrophosphate. tRNA 3'-terminal CCA addition is required both for tRNA processing and repair. Also involved in tRNA surveillance by mediating tandem CCA addition to generate a CCACCA at the 3' terminus of unstable tRNAs. While stable tRNAs receive only 3'-terminal CCA, unstable tRNAs are marked with CCACCA and rapidly degraded. The polypeptide is Multifunctional CCA protein (Actinobacillus pleuropneumoniae serotype 5b (strain L20)).